A 693-amino-acid chain; its full sequence is Sulfite reductase 1 [ferredoxin], chloroplastic (693 aa).

The N-terminal 62 residues, 1–62 (MTTSFGAAIN…PSSIVRAVST (62 aa)), are a transit peptide targeting the chloroplast. Cys502, Cys508, Cys548, and Cys552 together coordinate [4Fe-4S] cluster. Cys552 lines the siroheme pocket.

Belongs to the nitrite and sulfite reductase 4Fe-4S domain family. Monomer. Interacts with ferredoxin. The cofactor is siroheme. [4Fe-4S] cluster serves as cofactor. Post-translationally, phosphorylated; this phosphorylation reduces DNA-binding. As to expression, expressed in leaves, stems, roots and petals.

The protein localises to the plastid. It is found in the chloroplast stroma. It localises to the chloroplast nucleoid. Its subcellular location is the plastid stroma. The enzyme catalyses hydrogen sulfide + 6 oxidized [2Fe-2S]-[ferredoxin] + 3 H2O = sulfite + 6 reduced [2Fe-2S]-[ferredoxin] + 7 H(+). Essential protein with sulfite reductase activity required in assimilatory sulfate reduction pathway during both primary and secondary metabolism and thus involved in development and growth. Functionally, DNA-binding protein that binds to both double-stranded and single-stranded DNA without significant sequence specificity to reversibly repress the transcriptional activity of chloroplast nucleoids by promoting DNA compaction and possibly regulate DNA replication. This is Sulfite reductase 1 [ferredoxin], chloroplastic (SIR1) from Nicotiana tabacum (Common tobacco).